The chain runs to 293 residues: Nucleotide-binding protein OB2468 (293 aa).

Position 14–21 (14–21) interacts with ATP; it reads GMSGAGKT. Residue 65–68 participates in GTP binding; sequence DLRG.

It belongs to the RapZ-like family.

Functionally, displays ATPase and GTPase activities. This chain is Nucleotide-binding protein OB2468, found in Oceanobacillus iheyensis (strain DSM 14371 / CIP 107618 / JCM 11309 / KCTC 3954 / HTE831).